The following is a 115-amino-acid chain: U3-lycotoxin-Ls1d (115 aa).

The N-terminal stretch at 1-20 is a signal peptide; that stretch reads MKFVLLFGVLLVTLFSYSSA. The propeptide occupies 21-44; it reads EMLDDFDQADEDELLSLIEKEEAR. 4 cysteine pairs are disulfide-bonded: cysteine 48/cysteine 63, cysteine 55/cysteine 72, cysteine 62/cysteine 87, and cysteine 74/cysteine 85.

The protein belongs to the neurotoxin 19 (CSTX) family. 01 subfamily. Expressed by the venom gland.

The protein localises to the secreted. The polypeptide is U3-lycotoxin-Ls1d (Lycosa singoriensis (Wolf spider)).